The following is an 880-amino-acid chain: Alanine--tRNA ligase (880 aa).

His-567, His-571, Cys-669, and His-673 together coordinate Zn(2+).

The protein belongs to the class-II aminoacyl-tRNA synthetase family. Zn(2+) serves as cofactor.

The protein resides in the cytoplasm. The catalysed reaction is tRNA(Ala) + L-alanine + ATP = L-alanyl-tRNA(Ala) + AMP + diphosphate. In terms of biological role, catalyzes the attachment of alanine to tRNA(Ala) in a two-step reaction: alanine is first activated by ATP to form Ala-AMP and then transferred to the acceptor end of tRNA(Ala). Also edits incorrectly charged Ser-tRNA(Ala) and Gly-tRNA(Ala) via its editing domain. In Bacillus thuringiensis (strain Al Hakam), this protein is Alanine--tRNA ligase.